A 464-amino-acid polypeptide reads, in one-letter code: UDP-N-acetylmuramoylalanine--D-glutamate ligase (464 aa).

112 to 118 (GTDGKTT) provides a ligand contact to ATP.

This sequence belongs to the MurCDEF family.

The protein resides in the cytoplasm. The catalysed reaction is UDP-N-acetyl-alpha-D-muramoyl-L-alanine + D-glutamate + ATP = UDP-N-acetyl-alpha-D-muramoyl-L-alanyl-D-glutamate + ADP + phosphate + H(+). The protein operates within cell wall biogenesis; peptidoglycan biosynthesis. In terms of biological role, cell wall formation. Catalyzes the addition of glutamate to the nucleotide precursor UDP-N-acetylmuramoyl-L-alanine (UMA). The protein is UDP-N-acetylmuramoylalanine--D-glutamate ligase of Pelodictyon phaeoclathratiforme (strain DSM 5477 / BU-1).